A 459-amino-acid polypeptide reads, in one-letter code: Vanillin aminotransferase (459 aa).

Pyridoxal 5'-phosphate-binding positions include 115-116 and D255; that span reads GS. Position 284 is an N6-(pyridoxal phosphate)lysine (K284). A pyridoxal 5'-phosphate-binding site is contributed by 320-321; it reads FT. Residues 428-459 adopt a coiled-coil conformation; that stretch reads LSLEELDELIRIYGKALKDTEKRVEELKSQKK.

This sequence belongs to the class-III pyridoxal-phosphate-dependent aminotransferase family. Expressed in placental tissue of immature fruit.

It catalyses the reaction vanillin + L-alanine = vanillylamine + pyruvate. It functions in the pathway aromatic compound metabolism; phenylpropanoid biosynthesis. Involved in the biosynthesis of capsaicinoids natural products, pungent alkaloids synthesized from phenylpropanoid intermediates in the placental tissue of chili pepper fruit acting as repellant on herbivorous mammals and conferring spiciness to hot peppers. Can transfer an amine from vanillylamine to pyruvate forming vanillin and L-alanine. Can use pyruvate or oxaloacetate, but not 2-oxoglutarate as amino group acceptors. Is able to convert (S)-1-phenylethylamine into acetophenone in vitro. The sequence is that of Vanillin aminotransferase from Capsicum chinense (Scotch bonnet).